Reading from the N-terminus, the 35-residue chain is Mu-theraphotoxin-Hd1a (35 aa).

Intrachain disulfides connect Cys2–Cys17, Cys9–Cys24, and Cys16–Cys31.

This sequence belongs to the neurotoxin 10 (Hwtx-1) family. 22 (Htx-4) subfamily. Expressed by the venom gland.

The protein resides in the secreted. Functionally, gating-modifier toxin that reversibly and voltage-independently inhibits human Nav1.1/SCN1A and Nav1.7/SCN9A (IC(50)=111 nM). It also shows moderate inhibition on Nav1.2/SCN2A (1 uM inhibits current by 55%), Nav1.6/SCN8A (31%), Nav1.3/SCN5A (27%) and Nav1.4/SCN4A (23%). This toxin inhibits Nav1.7/SCN9A by interacting with the S3b-S4 paddle motif in channel domain II. In Cyriopagopus doriae (Tarantula spider), this protein is Mu-theraphotoxin-Hd1a.